A 188-amino-acid polypeptide reads, in one-letter code: Elongation factor P (188 aa).

It belongs to the elongation factor P family.

It is found in the cytoplasm. It functions in the pathway protein biosynthesis; polypeptide chain elongation. In terms of biological role, involved in peptide bond synthesis. Stimulates efficient translation and peptide-bond synthesis on native or reconstituted 70S ribosomes in vitro. Probably functions indirectly by altering the affinity of the ribosome for aminoacyl-tRNA, thus increasing their reactivity as acceptors for peptidyl transferase. This Rickettsia canadensis (strain McKiel) protein is Elongation factor P.